A 184-amino-acid chain; its full sequence is Elongation factor P (184 aa).

Belongs to the elongation factor P family.

It localises to the cytoplasm. It functions in the pathway protein biosynthesis; polypeptide chain elongation. Involved in peptide bond synthesis. Stimulates efficient translation and peptide-bond synthesis on native or reconstituted 70S ribosomes in vitro. Probably functions indirectly by altering the affinity of the ribosome for aminoacyl-tRNA, thus increasing their reactivity as acceptors for peptidyl transferase. This chain is Elongation factor P, found in Verminephrobacter eiseniae (strain EF01-2).